We begin with the raw amino-acid sequence, 239 residues long: Lactate utilization protein A (239 aa).

This sequence belongs to the LutA/YkgE family.

Its function is as follows. Is involved in L-lactate degradation and allows cells to grow with lactate as the sole carbon source. This is Lactate utilization protein A from Bacillus cereus (strain B4264).